Here is a 644-residue protein sequence, read N- to C-terminus: Macrolide export ATP-binding/permease protein MacB (644 aa).

Residues 7–245 enclose the ABC transporter domain; sequence IELQDITRSF…IPETDQNGRR (239 aa). An ATP-binding site is contributed by 43–50; it reads GPSGSGKS. Helical transmembrane passes span 271–291, 526–546, 570–590, and 607–627; these read ALTL…LAIG, IAAI…LVSV, FLTE…VIGI, and LLPM…FGFL.

This sequence belongs to the ABC transporter superfamily. Macrolide exporter (TC 3.A.1.122) family. As to quaternary structure, homodimer. Part of the tripartite efflux system MacAB-TolC, which is composed of an inner membrane transporter, MacB, a periplasmic membrane fusion protein, MacA, and an outer membrane component, TolC. The complex forms a large protein conduit and can translocate molecules across both the inner and outer membranes. Interacts with MacA.

Its subcellular location is the cell inner membrane. Its function is as follows. Part of the tripartite efflux system MacAB-TolC. MacB is a non-canonical ABC transporter that contains transmembrane domains (TMD), which form a pore in the inner membrane, and an ATP-binding domain (NBD), which is responsible for energy generation. Confers resistance against macrolides. The sequence is that of Macrolide export ATP-binding/permease protein MacB from Marinobacter nauticus (strain ATCC 700491 / DSM 11845 / VT8) (Marinobacter aquaeolei).